Here is a 157-residue protein sequence, read N- to C-terminus: MLNIVLYEPEIPPNTGNIIRLCANTGFRLHIIEPMGFAWDDKRLRRAGLDYHEFTAVTRHHDYRAFLEAENPQRLFALTTKGTPAHSAVSYQDGDYLMFGPETRGLPASILDALPAEQKIRIPMVPDSRSMNLSNAVSVVVYEAWRQLGYPGAVLRD.

Leu78, Gly100, Ile122, and Ser130 together coordinate S-adenosyl-L-methionine.

It belongs to the class IV-like SAM-binding methyltransferase superfamily. RNA methyltransferase TrmH family. TrmL subfamily. In terms of assembly, homodimer.

The protein resides in the cytoplasm. It catalyses the reaction cytidine(34) in tRNA + S-adenosyl-L-methionine = 2'-O-methylcytidine(34) in tRNA + S-adenosyl-L-homocysteine + H(+). The enzyme catalyses 5-carboxymethylaminomethyluridine(34) in tRNA(Leu) + S-adenosyl-L-methionine = 5-carboxymethylaminomethyl-2'-O-methyluridine(34) in tRNA(Leu) + S-adenosyl-L-homocysteine + H(+). Functionally, methylates the ribose at the nucleotide 34 wobble position in the two leucyl isoacceptors tRNA(Leu)(CmAA) and tRNA(Leu)(cmnm5UmAA). Catalyzes the methyl transfer from S-adenosyl-L-methionine to the 2'-OH of the wobble nucleotide. This chain is tRNA (cytidine(34)-2'-O)-methyltransferase, found in Escherichia coli O6:H1 (strain CFT073 / ATCC 700928 / UPEC).